Consider the following 447-residue polypeptide: C4-dicarboxylate transport protein (447 aa).

Transmembrane regions (helical) follow at residues 13–33, 49–69, 81–101, 149–169, 189–209, 227–247, 302–322, 336–356, and 357–377; these read SLYF…HYWP, LIKM…IAGM, LALL…LLIV, AFAK…GFAL, VLFA…FGAM, LMGT…GLIA, GYSF…VFIA, TLLA…GSGF, and IVLA…LALI. Positions 422 to 447 are disordered; it reads ETEAEANEPEAVLDEIDQHMPVPAAR. The segment covering 425–436 has biased composition (acidic residues); that stretch reads AEANEPEAVLDE.

It belongs to the dicarboxylate/amino acid:cation symporter (DAACS) (TC 2.A.23) family.

It is found in the cell inner membrane. Its function is as follows. Responsible for the transport of dicarboxylates such as succinate, fumarate, and malate from the periplasm across the membrane. The sequence is that of C4-dicarboxylate transport protein from Leptothrix cholodnii (strain ATCC 51168 / LMG 8142 / SP-6) (Leptothrix discophora (strain SP-6)).